A 390-amino-acid polypeptide reads, in one-letter code: Altered inheritance of mitochondria protein 6 (390 aa).

A signal peptide spans 1 to 26 (MLGLKGCLTILIGYVIAVCALFSSRG).

It belongs to the AIM6 family.

In Saccharomyces cerevisiae (strain YJM789) (Baker's yeast), this protein is Altered inheritance of mitochondria protein 6 (AIM6).